The sequence spans 792 residues: Ribonucleoside-diphosphate reductase large subunit (792 aa).

The ATP-cone domain maps to 1 to 92 (MHVIKRDGRQ…VSNLHKEAKK (92 aa)). Residues 5–6 (KR), 11–17 (ERVMFDK), Thr-53, and Asp-57 each bind ATP. Position 17 is an N6-acetyllysine (Lys-17). Residues Ser-202 and Ser-217 each contribute to the GDP site. Cys-218 and Cys-444 are disulfide-bonded. Residues 226-228 (DSI), Lys-243, Arg-256, and 263-264 (AG) contribute to the dTTP site. Lys-376 carries the post-translational modification N6-acetyllysine. The Proton acceptor role is filled by Ser-427. Cys-429 acts as the Cysteine radical intermediate in catalysis. GDP is bound by residues Glu-431 and 604–607 (TAST). Catalysis depends on Glu-431, which acts as the Proton acceptor. Thr-751 bears the Phosphothreonine mark.

Belongs to the ribonucleoside diphosphate reductase large chain family. Heterodimer of a large and a small subunit. Interacts with RRM2B. Interacts with AHCYL1 which inhibits its activity.

Its subcellular location is the cytoplasm. The catalysed reaction is a 2'-deoxyribonucleoside 5'-diphosphate + [thioredoxin]-disulfide + H2O = a ribonucleoside 5'-diphosphate + [thioredoxin]-dithiol. Its activity is regulated as follows. Under complex allosteric control mediated by deoxynucleoside triphosphates and ATP binding to separate specificity and activation sites on the M1 subunit. The type of nucleotide bound at the specificity site determines substrate preference. It seems probable that ATP makes the enzyme reduce CDP and UDP, dGTP favors ADP reduction and dTTP favors GDP reduction. Stimulated by ATP and inhibited by dATP binding to the activity site, the dATP inhibition is mediated by AHCYL1 which stabilizes dATP in the site. Provides the precursors necessary for DNA synthesis. Catalyzes the biosynthesis of deoxyribonucleotides from the corresponding ribonucleotides. The sequence is that of Ribonucleoside-diphosphate reductase large subunit (RRM1) from Pongo abelii (Sumatran orangutan).